The sequence spans 223 residues: Proteasome subunit beta (223 aa).

Positions M1 to G6 are cleaved as a propeptide — removed in mature form; by autocatalysis. T7 serves as the catalytic Nucleophile.

This sequence belongs to the peptidase T1B family. The 20S proteasome core is composed of 14 alpha and 14 beta subunits that assemble into four stacked heptameric rings, resulting in a barrel-shaped structure. The two inner rings, each composed of seven catalytic beta subunits, are sandwiched by two outer rings, each composed of seven alpha subunits. The catalytic chamber with the active sites is on the inside of the barrel. Has a gated structure, the ends of the cylinder being occluded by the N-termini of the alpha-subunits. Is capped at one or both ends by the proteasome regulatory ATPase, PAN.

It is found in the cytoplasm. The catalysed reaction is Cleavage of peptide bonds with very broad specificity.. The formation of the proteasomal ATPase PAN-20S proteasome complex, via the docking of the C-termini of PAN into the intersubunit pockets in the alpha-rings, triggers opening of the gate for substrate entry. Interconversion between the open-gate and close-gate conformations leads to a dynamic regulation of the 20S proteasome proteolysis activity. Functionally, component of the proteasome core, a large protease complex with broad specificity involved in protein degradation. The chain is Proteasome subunit beta from Methanocaldococcus vulcanius (strain ATCC 700851 / DSM 12094 / M7) (Methanococcus vulcanius).